The following is a 153-amino-acid chain: Probable histone H2A.2 (153 aa).

Disordered regions lie at residues 1–24 (MDASTKTKKGAGGRKGGGPRKKSV) and 127–153 (KKTERSNTVSKEPKSPKPKAGKSPKKA). Positions 127–141 (KKTERSNTVSKEPKS) are enriched in basic and acidic residues. Residues 142–153 (PKPKAGKSPKKA) are compositionally biased toward basic residues. Positions 149–152 (SPKK) match the SPKK motif motif.

Belongs to the histone H2A family. As to quaternary structure, the nucleosome is a histone octamer containing two molecules each of H2A, H2B, H3 and H4 assembled in one H3-H4 heterotetramer and two H2A-H2B heterodimers. The octamer wraps approximately 147 bp of DNA.

The protein resides in the nucleus. Its subcellular location is the chromosome. Core component of nucleosome. Nucleosomes wrap and compact DNA into chromatin, limiting DNA accessibility to the cellular machineries which require DNA as a template. Histones thereby play a central role in transcription regulation, DNA repair, DNA replication and chromosomal stability. DNA accessibility is regulated via a complex set of post-translational modifications of histones, also called histone code, and nucleosome remodeling. The protein is Probable histone H2A.2 of Medicago truncatula (Barrel medic).